We begin with the raw amino-acid sequence, 64 residues long: Large ribosomal subunit protein bL35 (64 aa).

It belongs to the bacterial ribosomal protein bL35 family.

This chain is Large ribosomal subunit protein bL35, found in Chlorobium chlorochromatii (strain CaD3).